The following is a 69-amino-acid chain: DNA gyrase inhibitor YacG (69 aa).

Zn(2+) contacts are provided by C14, C17, C33, and C37. Positions 46–69 are disordered; sequence ADEEKSIPGAPDMSDSDGWSEDQY. A compositionally biased stretch (acidic residues) spans 59 to 69; the sequence is SDSDGWSEDQY.

This sequence belongs to the DNA gyrase inhibitor YacG family. As to quaternary structure, interacts with GyrB. It depends on Zn(2+) as a cofactor.

Its function is as follows. Inhibits all the catalytic activities of DNA gyrase by preventing its interaction with DNA. Acts by binding directly to the C-terminal domain of GyrB, which probably disrupts DNA binding by the gyrase. In Aliivibrio fischeri (strain ATCC 700601 / ES114) (Vibrio fischeri), this protein is DNA gyrase inhibitor YacG.